The sequence spans 205 residues: High frequency lysogenization protein HflD homolog (205 aa).

Belongs to the HflD family.

It is found in the cytoplasm. It localises to the cell inner membrane. The sequence is that of High frequency lysogenization protein HflD homolog from Shewanella sp. (strain ANA-3).